A 162-amino-acid chain; its full sequence is Class I hydrophobin dewC (162 aa).

A signal peptide spans 1–21; the sequence is MQFTIASLIATAVLGLQMASA. 4 disulfides stabilise this stretch: C43–C119, C50–C113, C51–C90, and C120–C156.

The protein belongs to the fungal hydrophobin family. As to quaternary structure, self-assembles to form functional amyloid fibrils called rodlets. Self-assembly into fibrillar rodlets occurs spontaneously at hydrophobic:hydrophilic interfaces and the rodlets further associate laterally to form amphipathic monolayers.

The protein resides in the secreted. Its subcellular location is the spore wall. Its function is as follows. Aerial growth, conidiation, and dispersal of filamentous fungi in the environment rely upon a capability of their secreting small amphipathic proteins called hydrophobins (HPBs) with low sequence identity. Class I can self-assemble into an outermost layer of rodlet bundles on aerial cell surfaces, conferring cellular hydrophobicity that supports fungal growth, development and dispersal; whereas Class II form highly ordered films at water-air interfaces through intermolecular interactions but contribute nothing to the rodlet structure. DewC is a class I hydrophobin that contributes to the hydrophobicity of the spore surface. The protein is Class I hydrophobin dewC of Emericella nidulans (strain FGSC A4 / ATCC 38163 / CBS 112.46 / NRRL 194 / M139) (Aspergillus nidulans).